Reading from the N-terminus, the 299-residue chain is Probable xyloglucan endotransglucosylase/hydrolase protein 10 (299 aa).

An N-terminal signal peptide occupies residues 1-29 (MTLINRSKPFVLLVGFSIISSLLLWVSQA). A GH16 domain is found at 30 to 225 (SVVSSGDFNK…WSKGPFVASF (196 aa)). Residue N51 is glycosylated (N-linked (GlcNAc...) asparagine). E111 (nucleophile) is an active-site residue. E115 acts as the Proton donor in catalysis. Xyloglucan contacts are provided by residues E115, 128 to 130 (QTN), 138 to 140 (NRE), 204 to 205 (SW), and G209. Cystine bridges form between C233–C242 and C280–C294. N238 is a glycosylation site (N-linked (GlcNAc...) asparagine). R285 contributes to the xyloglucan binding site.

Belongs to the glycosyl hydrolase 16 family. XTH group 1 subfamily. Post-translationally, contains at least one intrachain disulfide bond essential for its enzymatic activity.

The protein localises to the secreted. It is found in the cell wall. Its subcellular location is the extracellular space. The protein resides in the apoplast. It carries out the reaction breaks a beta-(1-&gt;4) bond in the backbone of a xyloglucan and transfers the xyloglucanyl segment on to O-4 of the non-reducing terminal glucose residue of an acceptor, which can be a xyloglucan or an oligosaccharide of xyloglucan.. Its function is as follows. Catalyzes xyloglucan endohydrolysis (XEH) and/or endotransglycosylation (XET). Cleaves and religates xyloglucan polymers, an essential constituent of the primary cell wall, and thereby participates in cell wall construction of growing tissues. The chain is Probable xyloglucan endotransglucosylase/hydrolase protein 10 (XTH10) from Arabidopsis thaliana (Mouse-ear cress).